The sequence spans 600 residues: Aspartate--tRNA(Asp/Asn) ligase (600 aa).

Glu183 is a binding site for L-aspartate. The segment at 207-210 (QLFK) is aspartate. Arg229 serves as a coordination point for L-aspartate. ATP contacts are provided by residues 229–231 (RDE) and Gln238. His456 contacts L-aspartate. Residue Glu490 participates in ATP binding. Position 497 (Arg497) interacts with L-aspartate. An ATP-binding site is contributed by 542-545 (GLDR).

This sequence belongs to the class-II aminoacyl-tRNA synthetase family. Type 1 subfamily. Homodimer.

It is found in the cytoplasm. It catalyses the reaction tRNA(Asx) + L-aspartate + ATP = L-aspartyl-tRNA(Asx) + AMP + diphosphate. Aspartyl-tRNA synthetase with relaxed tRNA specificity since it is able to aspartylate not only its cognate tRNA(Asp) but also tRNA(Asn). Reaction proceeds in two steps: L-aspartate is first activated by ATP to form Asp-AMP and then transferred to the acceptor end of tRNA(Asp/Asn). The sequence is that of Aspartate--tRNA(Asp/Asn) ligase from Moorella thermoacetica (strain ATCC 39073 / JCM 9320).